The following is a 477-amino-acid chain: Endogenous retrovirus group V member 1 Env polyprotein (477 aa).

The signal sequence occupies residues 1–21 (MTEKFLFLYLSLLPMPLLSQA). The Extracellular segment spans residues 22–321 (QWNENSLVSF…NTTQPRQKRA (300 aa)). N-linked (GlcNAc...) asparagine glycosylation is present at N68. The chain crosses the membrane as a helical span at residues 322 to 342 (LGLILAGMGAAIGMIAPWGGF). The Cytoplasmic segment spans residues 343–477 (TYHDVTLRNL…LLSPLWPLSL (135 aa)).

The protein belongs to the gamma type-C retroviral envelope protein family. In terms of tissue distribution, expressed in placenta.

The protein localises to the membrane. The chain is Endogenous retrovirus group V member 1 Env polyprotein (ERVV-1) from Homo sapiens (Human).